Reading from the N-terminus, the 431-residue chain is Homeobox protein knotted-1-like 3 (431 aa).

A disordered region spans residues 15–47; it reads NHFTDQHQPPPPQPPPPPPQQQQHFQEAPPPNW. The segment covering 22 to 34 has biased composition (pro residues); it reads QPPPPQPPPPPPQ. Residues 322–342 form the ELK domain; the sequence is ELKHELKQGYKEKIVDIREEI. Residues 343–406 constitute a DNA-binding region (homeobox; TALE-type); the sequence is LRKRRAGKLP…NQRKRNWHSN (64 aa). Positions 402 to 431 are disordered; it reads NWHSNPSSSTVLKNKRKSNAGDNSGRERFA. Polar residues predominate over residues 404–413; that stretch reads HSNPSSSTVL.

It belongs to the TALE/KNOX homeobox family. In terms of assembly, may form heterodimeric complex with the TALE/BELL proteins. Interacts with OFP1, OFP2, OFP4, OFP12 and OFP14. Interacts with KNATM-B.

The protein resides in the nucleus. The protein is Homeobox protein knotted-1-like 3 (KNAT3) of Arabidopsis thaliana (Mouse-ear cress).